Reading from the N-terminus, the 24-residue chain is Small ribosomal subunit protein uS19 (24 aa).

The interval 1 to 24 (KLGEFSPTRTYRGHNKKDKKMQKK) is disordered. Basic residues predominate over residues 11–24 (YRGHNKKDKKMQKK).

This sequence belongs to the universal ribosomal protein uS19 family.

Functionally, protein S19 forms a complex with S13 that binds strongly to the 16S ribosomal RNA. The polypeptide is Small ribosomal subunit protein uS19 (Phytoplasma sp. (strain STRAWB2)).